A 274-amino-acid polypeptide reads, in one-letter code: MHQLKKLITVKVIGSGEKTVVLGHGFGTDQSVWKHLVPYLVEDYRVVLYDNMGAGPTNPDYFDFERYASLEGYAYDLLAILEELQIDSCIYLGHSLSSMTGVIASIFRPDLFSKLIMLSASPRFINADDYYGGFEKEDIDQLSQAMDTNYKSWIEGFAPLVIGGDMDSVAVQEFSRTLFNMRPDIALSVFRTIFTFDLRHFLCRVTVPCHIIQSSKDLAVPVAVSEYIHQNLGGKSIVEVISTEGHLPQLSAPEVTIPVLLRHISHDITSNAAP.

Catalysis depends on Ser95, which acts as the Nucleophile. Catalysis depends on residues Asp217 and His246.

Belongs to the AB hydrolase superfamily. In terms of assembly, interacts with MAX2A and MAX2B in the presence of (-)-germacrene D, thus forming an E3 SCF ubiquitin ligase complex (ASK-cullin-F-box) containing MAX2A or MAX2B and KAI2IA recognizing SMAX1A; this leads to the subsequent degradation of the transcriptional corepressor SMAX1A, thus triggering the activation of a downstream signaling cascade. As to expression, strongly expressed in stigma.

It localises to the nucleus. The protein localises to the cytoplasm. Its activity is regulated as follows. Hydrolysis activity toward yoshimulactone green (YLG), a fluorescent agonist to strigolactone receptor, is inhibited by (-)-germacrene D and GR24, a synthetic strigolactone analog. Hydrolase involved in the olfaction of sesquiterpene volatile organic compounds (VOCs) during volatile plant communication in a MAX2 proteins-dependent manner. Acts as a karrikin-insensitive receptor that stereospecifically perceives and binds to (-)-germacrene D, particularly in stigmas, and triggers a signaling cascade influencing plant fitness, as the result of reproductive organ growth-promoting effect; this process involves an interaction with MAX2 proteins (e.g. MAX2A and MAX2B) and the subsequent degradation of SMAX1a, a transcriptional corepressor. The chain is Karrikin insensitive 2 receptor IA from Petunia hybrida (Petunia).